Here is a 299-residue protein sequence, read N- to C-terminus: Taste receptor type 2 member 1 (299 aa).

The Extracellular portion of the chain corresponds to 1 to 9; that stretch reads MLESHLIIH. A helical transmembrane segment spans residues 10 to 30; the sequence is FLLAVIQFLLGTFTNGIIVVV. The Cytoplasmic portion of the chain corresponds to 31–55; sequence NGIDLIKHRKMAPLDLLLSCLAVSR. The chain crosses the membrane as a helical span at residues 56–76; that stretch reads IFLQLFIFYVNVIVIFFIEFI. The Extracellular segment spans residues 77-81; that stretch reads MCSEN. The chain crosses the membrane as a helical span at residues 82–102; sequence CAILLFINELELWLATWLGVF. The Cytoplasmic segment spans residues 103 to 124; the sequence is YCAKVASVPHPLFIWLKMKISK. The chain crosses the membrane as a helical span at residues 125–145; sequence LVPWMILGSLLYVSMTCVFHS. Topologically, residues 146–178 are extracellular; that stretch reads KYAGFMVPYFLRNFFSQNATIQKEDTPAIQIFS. Asparagine 163 is a glycosylation site (N-linked (GlcNAc...) asparagine). A helical membrane pass occupies residues 179-199; the sequence is FVAEFLVPLLIFLVAVLLLIF. Topologically, residues 200–222 are cytoplasmic; the sequence is SLGRHTRQMRNTVAGSRVPGRGA. A helical membrane pass occupies residues 223 to 243; that stretch reads PISALLSILSFVILYFSHCMI. Residues 244-257 are Extracellular-facing; sequence KVFLSSLKFHVRSF. The helical transmembrane segment at 258–278 threads the bilayer; that stretch reads ILPFFILVIGIYPSGHSLILI. Over 279–299 the chain is Cytoplasmic; it reads LGNXKLKQNAKKFLLHSKCCQ.

Belongs to the G-protein coupled receptor T2R family.

The protein localises to the membrane. In terms of biological role, receptor that may play a role in the perception of bitterness and is gustducin-linked. May play a role in sensing the chemical composition of the gastrointestinal content. The activity of this receptor may stimulate alpha gustducin, mediate PLC-beta-2 activation and lead to the gating of TRPM5. The chain is Taste receptor type 2 member 1 (TAS2R1) from Pongo pygmaeus (Bornean orangutan).